An 87-amino-acid polypeptide reads, in one-letter code: MANIKSAKKRIKVTETKTLNNRMVKSALKTVIKKFEAAVAGNNVEEAKTAFVAVTKSLDVAASKGVVHKNMAARKKSRLAAKLNAMA.

It belongs to the bacterial ribosomal protein bS20 family.

Binds directly to 16S ribosomal RNA. In Clostridium botulinum (strain Alaska E43 / Type E3), this protein is Small ribosomal subunit protein bS20.